The following is a 467-amino-acid chain: tRNA-2-methylthio-N(6)-dimethylallyladenosine synthase (467 aa).

The MTTase N-terminal domain maps to 4–124 (RKLFIKSYGC…LPEMVAKVER (121 aa)). The [4Fe-4S] cluster site is built by cysteine 13, cysteine 49, cysteine 87, cysteine 161, cysteine 165, and cysteine 168. In terms of domain architecture, Radical SAM core spans 147 to 379 (QAHGPSAFLS…QARLVEIQQA (233 aa)). The TRAM domain maps to 382–444 (QACVGRPMDV…SNSLAARLVE (63 aa)).

This sequence belongs to the methylthiotransferase family. MiaB subfamily. Monomer. Requires [4Fe-4S] cluster as cofactor.

It is found in the cytoplasm. The catalysed reaction is N(6)-dimethylallyladenosine(37) in tRNA + (sulfur carrier)-SH + AH2 + 2 S-adenosyl-L-methionine = 2-methylsulfanyl-N(6)-dimethylallyladenosine(37) in tRNA + (sulfur carrier)-H + 5'-deoxyadenosine + L-methionine + A + S-adenosyl-L-homocysteine + 2 H(+). Catalyzes the methylthiolation of N6-(dimethylallyl)adenosine (i(6)A), leading to the formation of 2-methylthio-N6-(dimethylallyl)adenosine (ms(2)i(6)A) at position 37 in tRNAs that read codons beginning with uridine. The sequence is that of tRNA-2-methylthio-N(6)-dimethylallyladenosine synthase from Rhodospirillum rubrum (strain ATCC 11170 / ATH 1.1.1 / DSM 467 / LMG 4362 / NCIMB 8255 / S1).